Here is a 331-residue protein sequence, read N- to C-terminus: tRNA-dihydrouridine(20/20a) synthase (331 aa).

FMN is bound by residues 18–20 (PML) and Gln-70. The active-site Proton donor is Cys-100. FMN-binding positions include Lys-139, His-172, 212 to 214 (NGG), and 234 to 235 (GR).

It belongs to the Dus family. DusA subfamily. FMN is required as a cofactor.

The enzyme catalyses 5,6-dihydrouridine(20) in tRNA + NADP(+) = uridine(20) in tRNA + NADPH + H(+). It catalyses the reaction 5,6-dihydrouridine(20) in tRNA + NAD(+) = uridine(20) in tRNA + NADH + H(+). It carries out the reaction 5,6-dihydrouridine(20a) in tRNA + NADP(+) = uridine(20a) in tRNA + NADPH + H(+). The catalysed reaction is 5,6-dihydrouridine(20a) in tRNA + NAD(+) = uridine(20a) in tRNA + NADH + H(+). Functionally, catalyzes the synthesis of 5,6-dihydrouridine (D), a modified base found in the D-loop of most tRNAs, via the reduction of the C5-C6 double bond in target uridines. Specifically modifies U20 and U20a in tRNAs. This chain is tRNA-dihydrouridine(20/20a) synthase, found in Escherichia coli O6:H1 (strain CFT073 / ATCC 700928 / UPEC).